A 284-amino-acid chain; its full sequence is MKLVIVSGRSGSGKSVALRVLEDLGYYCVDNLPLPLIGTLLEQLKGSNDLVAISVDVRNMPEQDKVLVKQLASLPPDTELTSFFLNSSDKILLKRYSETRRLHPLSKSQVSLQEAIKLEGKLLEPMSKLVDHYIDTSNLNIYDLSDQVRQILLGSVDKELVINFESFGFKHGMPTEADFMFDVRFLPNPHWELALRPLTGLDEPVAEFLNRQPLVNKFIWQIENLLETWLPHLERNNRSYLTVAIGCTGGQHRSVYVAEQLAKRFSNGKHKVYARHRELNNAKA.

Gly8–Ser15 is an ATP binding site. Asp56–Asn59 serves as a coordination point for GTP.

Belongs to the RapZ-like family.

Functionally, displays ATPase and GTPase activities. This chain is Nucleotide-binding protein Sbal223_0704, found in Shewanella baltica (strain OS223).